The sequence spans 732 residues: MKIFSESHKTVFVVDHCPYMAESCRQHVEFDMLVKNRTQGIIPLAPISKSLWTCSVESSMEYCRIMYDIFPFKKLVNFIVSDSGAHVLNSWTQEDQNLQELMAALATVGPPNPRADPECCSILHGLVAAVETLCKITEYQHEARTLLMENAERVGNRGRIICITNAKSDSHVRMLEDCVQETIHEHNKLAANSDHLMQIQKCELVLIHTYPVGEDSLVSDRPKKELSPVLTSEVHSVRAGRHLATKLNVLVQQHFDLASTTITNIPMKEEQHANTSANYDVELLHHKDAHVDFLRSGDSHSGSSSREGPFKETVTLKWCTPRTNSIELHYCTGAYRISPVDVNSRPSSCLTNFLLNGRSVLLEQPRKSGSKVISHMLSSHGGEIFLHVLSSSRSILEDPPSISEGCGGRVTDYRITDFGEFMRENRLTPFLDPRYKIDASLEIPLERAKDQLEKHTRYWPMIISQTTIFNMQAVVPLAGVIVKESLTEEDVLNCQKTIYNLVDMERKNDPLPVSTVGTRGKGPKRDEQYRIMWNELETLVRAHISNSEKHQRVLECLMACRSKPPEEEERKKRGRKREDREDKSEQAGKEHGTEKARPDADRLKGILERGKEELAEAEVIKDSPDSPEPPNKKPLVETDETPHMEKSKGPVSLLSLWSNRINTANSRKHQEFAGRLNSVNNRAELYQHLKEENGEEVGLTGGPRTAIPFLKCPRSPVVNRMETTENGKASRQ.

A compositionally biased stretch (basic and acidic residues) spans 564 to 648 (PPEEEERKKR…DETPHMEKSK (85 aa)). A disordered region spans residues 564-650 (PPEEEERKKR…TPHMEKSKGP (87 aa)). A Nuclear localization signal (NLS) motif is present at residues 572 to 582 (KRGRKREDRED). K611 participates in a covalent cross-link: Glycyl lysine isopeptide (Lys-Gly) (interchain with G-Cter in SUMO2). S623, S626, and S678 each carry phosphoserine. Residues 649-694 (GPVSLLSLWSNRINTANSRKHQEFAGRLNSVNNRAELYQHLKEENG) form a cleavage module binding motif (CMBM) region.

The protein belongs to the Integrator subunit 13 family. Component of the Integrator complex, composed of core subunits INTS1, INTS2, INTS3, INTS4, INTS5, INTS6, INTS7, INTS8, INTS9/RC74, INTS10, INTS11/CPSF3L, INTS12, INTS13, INTS14 and INTS15. The core complex associates with protein phosphatase 2A subunits PPP2CA and PPP2R1A, to form the Integrator-PP2A (INTAC) complex. INTS13 is part of the tail subcomplex, composed of INTS10, INTS13, INTS14 and INTS15. Interacts with transcription factors ZNF609 and ZNF655. Interacts with PAFAH1B1; this interaction may be required for proper recruitment of dynein complexes to the nuclear envelope at prophase.

It is found in the nucleus. The protein resides in the cytoplasm. Component of the integrator complex, a multiprotein complex that terminates RNA polymerase II (Pol II) transcription in the promoter-proximal region of genes. The integrator complex provides a quality checkpoint during transcription elongation by driving premature transcription termination of transcripts that are unfavorably configured for transcriptional elongation: the complex terminates transcription by (1) catalyzing dephosphorylation of the C-terminal domain (CTD) of Pol II subunit POLR2A/RPB1 and SUPT5H/SPT5, (2) degrading the exiting nascent RNA transcript via endonuclease activity and (3) promoting the release of Pol II from bound DNA. The integrator complex is also involved in terminating the synthesis of non-coding Pol II transcripts, such as enhancer RNAs (eRNAs), small nuclear RNAs (snRNAs), telomerase RNAs and long non-coding RNAs (lncRNAs). Within the integrator complex, INTS13 is part of the integrator tail module and acts as a platform for the recruitment of transcription factors at promoters. At prophase, mediates recruitment of cytoplasmic dynein to the nuclear envelope, a step important for proper centrosome-nucleus coupling. At G2/M phase, may be required for proper spindle formation and execution of cytokinesis. This is Integrator complex subunit 13 from Mus musculus (Mouse).